A 93-amino-acid polypeptide reads, in one-letter code: MLKPLGDRVVLKIEEKEEKVGGFVIAGNSHAATKTATVVAVGQGVRTLTGELVAPSVKAGDKVLVESHAGVEVKDGEETYLLVSEANILAIVE.

It belongs to the GroES chaperonin family. Heptamer of 7 subunits arranged in a ring. Interacts with the chaperonin GroEL.

It localises to the cytoplasm. Together with the chaperonin GroEL, plays an essential role in assisting protein folding. The GroEL-GroES system forms a nano-cage that allows encapsulation of the non-native substrate proteins and provides a physical environment optimized to promote and accelerate protein folding. GroES binds to the apical surface of the GroEL ring, thereby capping the opening of the GroEL channel. The polypeptide is Co-chaperonin GroES (Streptococcus gordonii (strain Challis / ATCC 35105 / BCRC 15272 / CH1 / DL1 / V288)).